The primary structure comprises 145 residues: Basic phospholipase A2 Vb-2 (145 aa).

The signal sequence occupies residues 1 to 19 (MNPAHLLVLLAVCVSLLGA). The propeptide occupies 20-27 (ANIPPQPL). Cystine bridges form between Cys-38/Cys-97, Cys-52/Cys-144, Cys-54/Cys-70, Cys-69/Cys-125, Cys-76/Cys-118, Cys-86/Cys-111, and Cys-104/Cys-116. Ca(2+) contacts are provided by Tyr-53, Gly-55, and Gly-57. Residue His-73 is part of the active site. Asp-74 serves as a coordination point for Ca(2+). Asp-119 is an active-site residue.

Requires Ca(2+) as cofactor. In terms of tissue distribution, expressed by the venom gland.

Its subcellular location is the secreted. It catalyses the reaction a 1,2-diacyl-sn-glycero-3-phosphocholine + H2O = a 1-acyl-sn-glycero-3-phosphocholine + a fatty acid + H(+). Functionally, snake venom phospholipase A2 (PLA2) that has only a weak enzymatic activity. Inhibits neuromuscular transmission by blocking acetylcholine release from the nerve termini. PLA2 catalyzes the calcium-dependent hydrolysis of the 2-acyl groups in 3-sn-phosphoglycerides. This is Basic phospholipase A2 Vb-2 from Bungarus fasciatus (Banded krait).